The chain runs to 1286 residues: Structural maintenance of chromosomes protein 4 (1286 aa).

A disordered region spans residues 1 to 51; the sequence is MRRKGTKPSTACHQEEGPPPSQDGAHSDEEMEQPAGEAESAAPAKPPGEEL. 3 positions are modified to phosphoserine: Ser-21, Ser-27, and Ser-40. Residue 111–118 participates in ATP binding; it reads GPNGSGKS. A Phosphoserine modification is found at Ser-141. Residues 270–589 are a coiled coil; the sequence is RRVEILNEHR…KVEEAKSSLA (320 aa). Residues Lys-379 and Lys-677 each carry the N6-acetyllysine modification. Residues 611–725 form the SMC hinge domain; that stretch reads PGIYGRLGDL…ANNLDQATRV (115 aa). Coiled-coil stretches lie at residues 768–1018 and 1068–1133; these read EISV…KLEQ and ESIT…LNEF. Ser-980 bears the Phosphoserine mark.

It belongs to the SMC family. SMC4 subfamily. Forms a heterodimer with SMC2. Component of the condensin complex, which contains the SMC2 and SMC4 heterodimer, and three non SMC subunits that probably regulate the complex: BRRN1/CAPH, CNAP1/CAPD2 and CAPG.

Its subcellular location is the nucleus. The protein resides in the cytoplasm. It localises to the chromosome. Functionally, central component of the condensin complex, a complex required for conversion of interphase chromatin into mitotic-like condense chromosomes. The condensin complex probably introduces positive supercoils into relaxed DNA in the presence of type I topoisomerases and converts nicked DNA into positive knotted forms in the presence of type II topoisomerases. The chain is Structural maintenance of chromosomes protein 4 (Smc4) from Mus musculus (Mouse).